Consider the following 158-residue polypeptide: Large ribosomal subunit protein uL11 (158 aa).

The interval 1–21 is disordered; sequence MAQSVKTMVEGGKATTGPPIG.

This sequence belongs to the universal ribosomal protein uL11 family. As to quaternary structure, part of the ribosomal stalk of the 50S ribosomal subunit. Interacts with L10 and the large rRNA to form the base of the stalk. L10 forms an elongated spine to which L12 dimers bind in a sequential fashion forming a multimeric L10(L12)X complex.

Forms part of the ribosomal stalk which helps the ribosome interact with GTP-bound translation factors. The polypeptide is Large ribosomal subunit protein uL11 (Thermoplasma volcanium (strain ATCC 51530 / DSM 4299 / JCM 9571 / NBRC 15438 / GSS1)).